Here is a 424-residue protein sequence, read N- to C-terminus: Calreticulin (424 aa).

Residues 1 to 19 (MRLLLCLIFLVFVFNFALS) form the signal peptide. Cys105 and Cys137 are joined by a disulfide. Tyr109, Lys111, Tyr128, and Asp135 together coordinate an alpha-D-glucoside. A run of 7 repeats spans residues 191-202 (IQAGNLADDWEL), 210-221 (DPKQSKPVDWVD), 227-238 (DPEDVKPAGHDD), 246-256 (PEAVKPEDWNE), 260-270 (GEWEAPTIANP), 274-284 (GEWKAKKIPNP), and 288-298 (GEWVHPLIDNP). The tract at residues 191–256 (IQAGNLADDW…EAVKPEDWNE (66 aa)) is 4 X 12 AA approximate repeats. The segment at 260–298 (GEWEAPTIANPEYKGEWKAKKIPNPEYKGEWVHPLIDNP) is 3 X 11 AA approximate repeats. Residue Glu318 participates in an alpha-D-glucoside binding. A compositionally biased stretch (basic and acidic residues) spans 370–385 (RKKADEKLAAEKAAEK). Positions 370–424 (RKKADEKLAAEKAAEKEAEEADEEEEEVAEEDLVKTDDKKEEVKKSTKKVDHDEL) are disordered. Positions 386–400 (EAEEADEEEEEVAEE) are enriched in acidic residues. Residues 401-424 (DLVKTDDKKEEVKKSTKKVDHDEL) show a composition bias toward basic and acidic residues. The Prevents secretion from ER signature appears at 421 to 424 (HDEL).

This sequence belongs to the calreticulin family.

It is found in the endoplasmic reticulum lumen. Molecular calcium-binding chaperone promoting folding, oligomeric assembly and quality control in the ER via the calreticulin/calnexin cycle. This lectin may interact transiently with almost all of the monoglucosylated glycoproteins that are synthesized in the ER. The protein is Calreticulin (crtA) of Dictyostelium discoideum (Social amoeba).